Reading from the N-terminus, the 420-residue chain is MTNELLKDLEWRGLIYQQTDAEGLENILNKEQVTLYCGVDPTADSMHIGHLLPLLTLRRFQNHGHKPIVLIGGGTGMIGDPSGKTDERVLQTEEQVEQNVRGIGNQMDKIFDFSGKEAAQLVNNRDWLGKISLIDFLRDYGKHVGVNYMLGKDSVQSRLENGISYTEFTYMILQAIDFGHLNREYNCKVQIGGSDQWGNITSGIELMRRMYGQTEAYGITIPLVTKADGKKFGKSEAGTVWLDAEKTSPYELYQFWINTTDADVIKFLKYFTFLDKEEIERLEQSKEEAPHLREAQKALAENVVRFIHGEGALNDAIRISEALFSGDLKALSSDELREGFKDVPQAEVSNATTNIVDFIVEAGISSSKRQAREDVSNGAIYINGEREQDLKYEISEADKIDNEFTIVRRGKKKYFMVKYK.

Y36 serves as a coordination point for L-tyrosine. The short motif at 41-50 (PTADSMHIGH) is the 'HIGH' region element. L-tyrosine is bound by residues Y170 and Q174. Residues 231–235 (KFGKS) carry the 'KMSKS' region motif. K234 contributes to the ATP binding site. One can recognise an S4 RNA-binding domain in the interval 353 to 420 (TNIVDFIVEA…KKKYFMVKYK (68 aa)).

The protein belongs to the class-I aminoacyl-tRNA synthetase family. TyrS type 1 subfamily. In terms of assembly, homodimer.

It localises to the cytoplasm. It carries out the reaction tRNA(Tyr) + L-tyrosine + ATP = L-tyrosyl-tRNA(Tyr) + AMP + diphosphate + H(+). Catalyzes the attachment of tyrosine to tRNA(Tyr) in a two-step reaction: tyrosine is first activated by ATP to form Tyr-AMP and then transferred to the acceptor end of tRNA(Tyr). This chain is Tyrosine--tRNA ligase, found in Staphylococcus carnosus (strain TM300).